The chain runs to 430 residues: NADH-quinone oxidoreductase subunit D 1 (430 aa).

The interval 1–36 is disordered; that stretch reads MSEAKGVGGIDPRATPGSAGAGERPPMGTVSRAGDG.

This sequence belongs to the complex I 49 kDa subunit family. In terms of assembly, NDH-1 is composed of 14 different subunits. Subunits NuoB, C, D, E, F, and G constitute the peripheral sector of the complex.

It localises to the cell inner membrane. It carries out the reaction a quinone + NADH + 5 H(+)(in) = a quinol + NAD(+) + 4 H(+)(out). In terms of biological role, NDH-1 shuttles electrons from NADH, via FMN and iron-sulfur (Fe-S) centers, to quinones in the respiratory chain. The immediate electron acceptor for the enzyme in this species is believed to be ubiquinone. Couples the redox reaction to proton translocation (for every two electrons transferred, four hydrogen ions are translocated across the cytoplasmic membrane), and thus conserves the redox energy in a proton gradient. This Anaeromyxobacter dehalogenans (strain 2CP-C) protein is NADH-quinone oxidoreductase subunit D 1.